Here is a 271-residue protein sequence, read N- to C-terminus: 2,3,4,5-tetrahydropyridine-2,6-dicarboxylate N-succinyltransferase (271 aa).

The protein belongs to the transferase hexapeptide repeat family.

It localises to the cytoplasm. It catalyses the reaction (S)-2,3,4,5-tetrahydrodipicolinate + succinyl-CoA + H2O = (S)-2-succinylamino-6-oxoheptanedioate + CoA. It functions in the pathway amino-acid biosynthesis; L-lysine biosynthesis via DAP pathway; LL-2,6-diaminopimelate from (S)-tetrahydrodipicolinate (succinylase route): step 1/3. The chain is 2,3,4,5-tetrahydropyridine-2,6-dicarboxylate N-succinyltransferase from Coxiella burnetii (strain CbuG_Q212) (Coxiella burnetii (strain Q212)).